Reading from the N-terminus, the 169-residue chain is ATP synthase subunit b (169 aa).

Residues 11-31 form a helical membrane-spanning segment; sequence IPSFIAQVVNFGLLLGLLYLF.

This sequence belongs to the ATPase B chain family. F-type ATPases have 2 components, F(1) - the catalytic core - and F(0) - the membrane proton channel. F(1) has five subunits: alpha(3), beta(3), gamma(1), delta(1), epsilon(1). F(0) has three main subunits: a(1), b(2) and c(10-14). The alpha and beta chains form an alternating ring which encloses part of the gamma chain. F(1) is attached to F(0) by a central stalk formed by the gamma and epsilon chains, while a peripheral stalk is formed by the delta and b chains.

It localises to the cell membrane. Its function is as follows. F(1)F(0) ATP synthase produces ATP from ADP in the presence of a proton or sodium gradient. F-type ATPases consist of two structural domains, F(1) containing the extramembraneous catalytic core and F(0) containing the membrane proton channel, linked together by a central stalk and a peripheral stalk. During catalysis, ATP synthesis in the catalytic domain of F(1) is coupled via a rotary mechanism of the central stalk subunits to proton translocation. Component of the F(0) channel, it forms part of the peripheral stalk, linking F(1) to F(0). This is ATP synthase subunit b from Dehalococcoides mccartyi (strain ATCC BAA-2266 / KCTC 15142 / 195) (Dehalococcoides ethenogenes (strain 195)).